The primary structure comprises 395 residues: Peptide-N(4)-(N-acetyl-beta-glucosaminyl)asparagine amidase (395 aa).

4 residues coordinate Zn(2+): C131, C134, C172, and C175. Catalysis depends on C198, which acts as the Nucleophile. Residues H232 and D249 contribute to the active site. E252 is a substrate binding site. Positions 363–395 are disordered; sequence PELTKTTPSTDLPSGRQSGSTEWTKSRGENGES. The segment covering 366–385 has biased composition (polar residues); the sequence is TKTTPSTDLPSGRQSGSTEW. A compositionally biased stretch (basic and acidic residues) spans 386–395; it reads TKSRGENGES.

It belongs to the transglutaminase-like superfamily. PNGase family. Zn(2+) serves as cofactor.

The protein localises to the cytoplasm. It carries out the reaction Hydrolysis of an N(4)-(acetyl-beta-D-glucosaminyl)asparagine residue in which the glucosamine residue may be further glycosylated, to yield a (substituted) N-acetyl-beta-D-glucosaminylamine and a peptide containing an aspartate residue.. Functionally, specifically deglycosylates the denatured form of N-linked glycoproteins in the cytoplasm and assists their proteasome-mediated degradation. Cleaves the beta-aspartyl-glucosamine (GlcNAc) of the glycan and the amide side chain of Asn, converting Asn to Asp. Prefers proteins containing high-mannose over those bearing complex type oligosaccharides. Can recognize misfolded proteins in the endoplasmic reticulum that are exported to the cytosol to be destroyed and deglycosylate them, while it has no activity toward native proteins. Deglycosylation is a prerequisite for subsequent proteasome-mediated degradation of some, but not all, misfolded glycoproteins. In Candida albicans (strain SC5314 / ATCC MYA-2876) (Yeast), this protein is Peptide-N(4)-(N-acetyl-beta-glucosaminyl)asparagine amidase (PNG1).